The sequence spans 530 residues: RNA-binding protein 39 (530 aa).

A disordered region spans residues 1 to 146 (MADDIDIEAM…PVREPIDNLT (146 aa)). Ala-2 carries the N-acetylalanine modification. Over residues 14-32 (PYKKDENKLNSANGHEERS) the composition is skewed to basic and acidic residues. Basic residues-rich tracts occupy residues 33–56 (KKRKKSKSRSRSHERKRSKSKERK) and 64–95 (KKSKSRERKRSRSKERRRSRSRSRDRRFRGRY). Position 95 is a phosphotyrosine (Tyr-95). Phosphoserine is present on residues Ser-97 and Ser-100. Residue Lys-111 forms a Glycyl lysine isopeptide (Lys-Gly) (interchain with G-Cter in SUMO2) linkage. Ser-117 is modified (phosphoserine). Residue Lys-119 forms a Glycyl lysine isopeptide (Lys-Gly) (interchain with G-Cter in SUMO2) linkage. Basic residues predominate over residues 119–130 (KLSRRRSRSKSP). Residues Ser-121 and Ser-136 each carry the phosphoserine modification. Basic and acidic residues predominate over residues 131–146 (FRKDKSPVREPIDNLT). Thr-146 carries the post-translational modification Phosphothreonine. One can recognise an RRM 1 domain in the interval 153–230 (RTVFCMQLAA…VPIIVQASQA (78 aa)). A Glycyl lysine isopeptide (Lys-Gly) (interchain with G-Cter in SUMO2) cross-link involves residue Lys-244. The RRM 2 domain maps to 250–328 (MRLYVGSLHF…RPMKVGHVTE (79 aa)). Positions 291 to 355 (KGYGFITFSD…RTGIDLGTTG (65 aa)) are activating domain. The tract at residues 291–406 (KGYGFITFSD…IDLQTRLSQQ (116 aa)) is interaction with JUN. Residues Ser-334, Ser-337, and Ser-341 each carry the phosphoserine modification. Residues 355–406 (GRLQLMARLAEGTGLQIPPAAQQALQMSGSLAFGAVAEFSFVIDLQTRLSQQ) form an interaction with ESR1 and ESR2 region. Residues 406–530 (QTEASALAAA…ATQLLVPSRR (125 aa)) form an interaction with NCOA6 region. Positions 445 to 508 (EIKDDVIEEC…KMITAAYVPL (64 aa)) constitute an RRM 3 domain.

It belongs to the splicing factor SR family. Interacts with NCOA6 and JUN. Interacts with ESR1 and ESR2, in the presence of estradiol (E2). Interacts with RSRC1 (via Arg/Ser-rich domain). Interacts with SF3B1. Interacts with ZNF106 (via N-terminus).

The protein localises to the nucleus. Its function is as follows. RNA-binding protein that acts as a pre-mRNA splicing factor. Acts by promoting exon inclusion via regulation of exon cassette splicing. Also acts as a transcriptional coactivator for steroid nuclear receptors ESR1/ER-alpha and ESR2/ER-beta, and JUN/AP-1, independently of the pre-mRNA splicing factor activity. In Mus musculus (Mouse), this protein is RNA-binding protein 39 (Rbm39).